Here is a 383-residue protein sequence, read N- to C-terminus: MSVVGIIAEFNPFHSGHEFLLNQARLIAGNDPIVVVMSGNYVQRGEMAIMSKYQRAKVALQSGADLVFETPFSTAVEPADLFSLGNIEQLAKLGVTDLVFGVENANLNFAYLGSKIAEIPQNHMDFKDYSQTYSTQYNQMVAREVGHEVNQPNAILGLAYAVANHNLGSPLKLHPVNRIGAGHDDLLQRNGVVQSASAIRNLLLHGEDTSNLKYWVPKAEAIELSKQEIYPNWNLLYPFLKYRIESSSIDDLRQIYQMSEGLEYKMKQEIHLSRDFTEFLRRIKSKRYTYSRLRRLSLYTLLNVTQDDMIASFNEESLMLLGFSKTGRQYLKKNRKDFQTEIISKVDKRSAKSGSLALQVRTDRLFEQIMGVDQNFGQRPIEV.

ATP is bound by residues 7-20, Gly101, Asn153, and 178-179; these read IAEF…HEFL and RI.

The protein belongs to the TmcAL family.

It localises to the cytoplasm. The catalysed reaction is cytidine(34) in elongator tRNA(Met) + acetate + ATP = N(4)-acetylcytidine(34) in elongator tRNA(Met) + AMP + diphosphate. Functionally, catalyzes the formation of N(4)-acetylcytidine (ac(4)C) at the wobble position of elongator tRNA(Met), using acetate and ATP as substrates. First activates an acetate ion to form acetyladenylate (Ac-AMP) and then transfers the acetyl group to tRNA to form ac(4)C34. The polypeptide is tRNA(Met) cytidine acetate ligase (Lactobacillus helveticus (strain DPC 4571)).